The chain runs to 217 residues: Protein GrpE (217 aa).

A compositionally biased stretch (basic and acidic residues) spans methionine 1 to aspartate 10. Positions methionine 1–serine 39 are disordered. Over residues alanine 12 to glycine 31 the composition is skewed to acidic residues.

Belongs to the GrpE family. As to quaternary structure, homodimer.

It is found in the cytoplasm. Participates actively in the response to hyperosmotic and heat shock by preventing the aggregation of stress-denatured proteins, in association with DnaK and GrpE. It is the nucleotide exchange factor for DnaK and may function as a thermosensor. Unfolded proteins bind initially to DnaJ; upon interaction with the DnaJ-bound protein, DnaK hydrolyzes its bound ATP, resulting in the formation of a stable complex. GrpE releases ADP from DnaK; ATP binding to DnaK triggers the release of the substrate protein, thus completing the reaction cycle. Several rounds of ATP-dependent interactions between DnaJ, DnaK and GrpE are required for fully efficient folding. This Halobacterium salinarum (strain ATCC 29341 / DSM 671 / R1) protein is Protein GrpE.